The sequence spans 295 residues: Foldase protein PrsA (295 aa).

The first 19 residues, 1–19, serve as a signal peptide directing secretion; sequence MKKVLIGFASIAMAFTLAA. A lipid anchor (N-palmitoyl cysteine) is attached at cysteine 20. A lipid anchor (S-diacylglycerol cysteine) is attached at cysteine 20. The region spanning 136-229 is the PpiC domain; the sequence is EPKVTVAQIL…YGYQVIKMIN (94 aa).

Belongs to the PrsA family.

It is found in the cell membrane. It catalyses the reaction [protein]-peptidylproline (omega=180) = [protein]-peptidylproline (omega=0). Functionally, plays a major role in protein secretion by helping the post-translocational extracellular folding of several secreted proteins. The sequence is that of Foldase protein PrsA from Pediococcus pentosaceus (strain ATCC 25745 / CCUG 21536 / LMG 10740 / 183-1w).